Reading from the N-terminus, the 155-residue chain is Small ribosomal subunit protein uS7 (155 aa).

This sequence belongs to the universal ribosomal protein uS7 family. As to quaternary structure, part of the 30S ribosomal subunit. Contacts proteins S9 and S11.

In terms of biological role, one of the primary rRNA binding proteins, it binds directly to 16S rRNA where it nucleates assembly of the head domain of the 30S subunit. Is located at the subunit interface close to the decoding center, probably blocks exit of the E-site tRNA. The protein is Small ribosomal subunit protein uS7 of Mycoplasma genitalium (strain ATCC 33530 / DSM 19775 / NCTC 10195 / G37) (Mycoplasmoides genitalium).